The primary structure comprises 115 residues: MNMLTVLSVNIALSTCLITIAFWLPQLNLYTEKANPYECGFDPMSSARLPFSMKFFLVAITFLLFDLEIALLLPLPWAIQMNNINTMMLTAFILVSVLALGLAYEWMQKGLEWTE.

3 helical membrane passes run Leu-4–Leu-24, Phe-55–Leu-75, and Met-87–Met-107.

The protein belongs to the complex I subunit 3 family. In terms of assembly, core subunit of respiratory chain NADH dehydrogenase (Complex I) which is composed of 45 different subunits. Interacts with TMEM186. Interacts with TMEM242.

It localises to the mitochondrion inner membrane. The enzyme catalyses a ubiquinone + NADH + 5 H(+)(in) = a ubiquinol + NAD(+) + 4 H(+)(out). Core subunit of the mitochondrial membrane respiratory chain NADH dehydrogenase (Complex I) which catalyzes electron transfer from NADH through the respiratory chain, using ubiquinone as an electron acceptor. Essential for the catalytic activity of complex I. The chain is NADH-ubiquinone oxidoreductase chain 3 from Peromyscus slevini (Slevin's mouse).